The sequence spans 316 residues: 4-hydroxy-3-methylbut-2-enyl diphosphate reductase (316 aa).

Cys-12 lines the [4Fe-4S] cluster pocket. Residues His-41 and His-74 each contribute to the (2E)-4-hydroxy-3-methylbut-2-enyl diphosphate site. Positions 41 and 74 each coordinate dimethylallyl diphosphate. Isopentenyl diphosphate contacts are provided by His-41 and His-74. Cys-96 contributes to the [4Fe-4S] cluster binding site. His-124 provides a ligand contact to (2E)-4-hydroxy-3-methylbut-2-enyl diphosphate. His-124 lines the dimethylallyl diphosphate pocket. An isopentenyl diphosphate-binding site is contributed by His-124. Catalysis depends on Glu-126, which acts as the Proton donor. Thr-167 is a binding site for (2E)-4-hydroxy-3-methylbut-2-enyl diphosphate. Cys-197 lines the [4Fe-4S] cluster pocket. The (2E)-4-hydroxy-3-methylbut-2-enyl diphosphate site is built by Ser-225, Ser-226, Asn-227, and Ser-269. Residues Ser-225, Ser-226, Asn-227, and Ser-269 each contribute to the dimethylallyl diphosphate site. Isopentenyl diphosphate-binding residues include Ser-225, Ser-226, Asn-227, and Ser-269.

Belongs to the IspH family. As to quaternary structure, homodimer. The cofactor is [4Fe-4S] cluster.

The catalysed reaction is isopentenyl diphosphate + 2 oxidized [2Fe-2S]-[ferredoxin] + H2O = (2E)-4-hydroxy-3-methylbut-2-enyl diphosphate + 2 reduced [2Fe-2S]-[ferredoxin] + 2 H(+). It catalyses the reaction dimethylallyl diphosphate + 2 oxidized [2Fe-2S]-[ferredoxin] + H2O = (2E)-4-hydroxy-3-methylbut-2-enyl diphosphate + 2 reduced [2Fe-2S]-[ferredoxin] + 2 H(+). It functions in the pathway isoprenoid biosynthesis; dimethylallyl diphosphate biosynthesis; dimethylallyl diphosphate from (2E)-4-hydroxy-3-methylbutenyl diphosphate: step 1/1. It participates in isoprenoid biosynthesis; isopentenyl diphosphate biosynthesis via DXP pathway; isopentenyl diphosphate from 1-deoxy-D-xylulose 5-phosphate: step 6/6. In terms of biological role, catalyzes the conversion of 1-hydroxy-2-methyl-2-(E)-butenyl 4-diphosphate (HMBPP) into a mixture of isopentenyl diphosphate (IPP) and dimethylallyl diphosphate (DMAPP). Acts in the terminal step of the DOXP/MEP pathway for isoprenoid precursor biosynthesis. The sequence is that of 4-hydroxy-3-methylbut-2-enyl diphosphate reductase from Pectobacterium atrosepticum (strain SCRI 1043 / ATCC BAA-672) (Erwinia carotovora subsp. atroseptica).